Consider the following 171-residue polypeptide: 3-hydroxydecanoyl-[acyl-carrier-protein] dehydratase (171 aa).

Histidine 70 is a catalytic residue.

This sequence belongs to the thioester dehydratase family. FabA subfamily. In terms of assembly, homodimer.

It is found in the cytoplasm. It catalyses the reaction a (3R)-hydroxyacyl-[ACP] = a (2E)-enoyl-[ACP] + H2O. The enzyme catalyses (3R)-hydroxydecanoyl-[ACP] = (2E)-decenoyl-[ACP] + H2O. The catalysed reaction is (2E)-decenoyl-[ACP] = (3Z)-decenoyl-[ACP]. It functions in the pathway lipid metabolism; fatty acid biosynthesis. Its function is as follows. Necessary for the introduction of cis unsaturation into fatty acids. Catalyzes the dehydration of (3R)-3-hydroxydecanoyl-ACP to E-(2)-decenoyl-ACP and then its isomerization to Z-(3)-decenoyl-ACP. Can catalyze the dehydratase reaction for beta-hydroxyacyl-ACPs with saturated chain lengths up to 16:0, being most active on intermediate chain length. The protein is 3-hydroxydecanoyl-[acyl-carrier-protein] dehydratase of Shewanella denitrificans (strain OS217 / ATCC BAA-1090 / DSM 15013).